We begin with the raw amino-acid sequence, 142 residues long: MAKGKYAANILKQTRKNARWKDTSYGRRVLGLNVKADPLGGAPQGRGIVLEKVGVEAKQPNSAIRKCVRIQLIKNGRQVTAFCPGDGAVNFIDEHDEVTVERIGGRMGGAMGDIPGVRFRVTAVNNVSLNQMVIGRLEKPRR.

It belongs to the universal ribosomal protein uS12 family. As to quaternary structure, part of the 30S ribosomal subunit.

Functionally, with S4 and S5 plays an important role in translational accuracy. Located at the interface of the 30S and 50S subunits. In Methanosarcina barkeri (strain Fusaro / DSM 804), this protein is Small ribosomal subunit protein uS12.